The following is a 293-amino-acid chain: Cep170-like protein (293 aa).

Disordered stretches follow at residues proline 78–threonine 110 and phenylalanine 217–glutamate 270. Residues lysine 227–leucine 245 are compositionally biased toward polar residues.

The protein belongs to the CEP170 family.

The polypeptide is Cep170-like protein (CEP170P1) (Homo sapiens (Human)).